Here is a 206-residue protein sequence, read N- to C-terminus: dTTP/UTP pyrophosphatase (206 aa).

Catalysis depends on Asp-79, which acts as the Proton acceptor.

The protein belongs to the Maf family. YhdE subfamily. A divalent metal cation serves as cofactor.

It is found in the cytoplasm. The enzyme catalyses dTTP + H2O = dTMP + diphosphate + H(+). The catalysed reaction is UTP + H2O = UMP + diphosphate + H(+). In terms of biological role, nucleoside triphosphate pyrophosphatase that hydrolyzes dTTP and UTP. May have a dual role in cell division arrest and in preventing the incorporation of modified nucleotides into cellular nucleic acids. This chain is dTTP/UTP pyrophosphatase, found in Rhizobium meliloti (strain 1021) (Ensifer meliloti).